The chain runs to 227 residues: Cytochrome c oxidase subunit 2 (227 aa).

At 1 to 14 (MAHAAQVGLQDATS) the chain is on the mitochondrial intermembrane side. Residues 15–45 (PIMEELITFHDHALMIIFLICFLVLYALFLT) form a helical membrane-spanning segment. Residues 46–59 (LTTKLTNTNISDAQ) lie on the Mitochondrial matrix side of the membrane. Residues 60-87 (EMETVWTILPAIILVLIALPSLRILYMT) form a helical membrane-spanning segment. The Mitochondrial intermembrane segment spans residues 88–227 (DEVNDPSLTI…IFEMGPVFTL (140 aa)). Residues H161, C196, E198, C200, H204, and M207 each contribute to the Cu cation site. E198 serves as a coordination point for Mg(2+).

It belongs to the cytochrome c oxidase subunit 2 family. In terms of assembly, component of the cytochrome c oxidase (complex IV, CIV), a multisubunit enzyme composed of 14 subunits. The complex is composed of a catalytic core of 3 subunits MT-CO1, MT-CO2 and MT-CO3, encoded in the mitochondrial DNA, and 11 supernumerary subunits COX4I1 (or COX4I2), COX5A, COX5B, COX6A1 (or COX6A2), COX6B1 (or COX6B2), COX6C, COX7A2 (or COX7A1), COX7B, COX7C, COX8A and NDUFA4, which are encoded in the nuclear genome. The complex exists as a monomer or a dimer and forms supercomplexes (SCs) in the inner mitochondrial membrane with NADH-ubiquinone oxidoreductase (complex I, CI) and ubiquinol-cytochrome c oxidoreductase (cytochrome b-c1 complex, complex III, CIII), resulting in different assemblies (supercomplex SCI(1)III(2)IV(1) and megacomplex MCI(2)III(2)IV(2)). Found in a complex with TMEM177, COA6, COX18, COX20, SCO1 and SCO2. Interacts with TMEM177 in a COX20-dependent manner. Interacts with COX20. Interacts with COX16. Requires Cu cation as cofactor.

The protein resides in the mitochondrion inner membrane. It catalyses the reaction 4 Fe(II)-[cytochrome c] + O2 + 8 H(+)(in) = 4 Fe(III)-[cytochrome c] + 2 H2O + 4 H(+)(out). Component of the cytochrome c oxidase, the last enzyme in the mitochondrial electron transport chain which drives oxidative phosphorylation. The respiratory chain contains 3 multisubunit complexes succinate dehydrogenase (complex II, CII), ubiquinol-cytochrome c oxidoreductase (cytochrome b-c1 complex, complex III, CIII) and cytochrome c oxidase (complex IV, CIV), that cooperate to transfer electrons derived from NADH and succinate to molecular oxygen, creating an electrochemical gradient over the inner membrane that drives transmembrane transport and the ATP synthase. Cytochrome c oxidase is the component of the respiratory chain that catalyzes the reduction of oxygen to water. Electrons originating from reduced cytochrome c in the intermembrane space (IMS) are transferred via the dinuclear copper A center (CU(A)) of subunit 2 and heme A of subunit 1 to the active site in subunit 1, a binuclear center (BNC) formed by heme A3 and copper B (CU(B)). The BNC reduces molecular oxygen to 2 water molecules using 4 electrons from cytochrome c in the IMS and 4 protons from the mitochondrial matrix. This is Cytochrome c oxidase subunit 2 (MT-CO2) from Homo sapiens (Human).